A 1134-amino-acid chain; its full sequence is Tetrathionate reductase subunit A (1134 aa).

Residues 1–31 (MQLSRRDFIKGLVAVGSASVFLAGYSETVDR) constitute a signal peptide (tat-type signal). A 4Fe-4S Mo/W bis-MGD-type domain is found at 46–133 (GRIVHSACLG…DGIHYLYDPY (88 aa)). [4Fe-4S] cluster contacts are provided by Cys53, Cys56, Cys60, and Cys119.

It belongs to the prokaryotic molybdopterin-containing oxidoreductase family. In terms of assembly, probably composed of three subunits: TtrA, TtrB and TtrC. Precursor interacts with TtrD. [4Fe-4S] cluster is required as a cofactor. Requires Mo-bis(molybdopterin guanine dinucleotide) as cofactor. Post-translationally, exported by the Tat system. The position of the signal peptide cleavage has not been experimentally proven.

It is found in the cell membrane. Functionally, part of a membrane-bound tetrathionate reductase that catalyzes the reduction of tetrathionate to thiosulfate. TtrA is the catalytic subunit. In Archaeoglobus fulgidus (strain ATCC 49558 / DSM 4304 / JCM 9628 / NBRC 100126 / VC-16), this protein is Tetrathionate reductase subunit A (ttrA).